The primary structure comprises 341 residues: L-threonine 3-dehydrogenase (341 aa).

Cysteine 38 is a Zn(2+) binding site. Active-site charge relay system residues include threonine 40 and histidine 43. Histidine 63, glutamate 64, cysteine 93, cysteine 96, cysteine 99, and cysteine 107 together coordinate Zn(2+). NAD(+) is bound by residues isoleucine 175, aspartate 195, arginine 200, 262-264 (LGI), and 286-287 (IY).

This sequence belongs to the zinc-containing alcohol dehydrogenase family. As to quaternary structure, homotetramer. Zn(2+) serves as cofactor.

It is found in the cytoplasm. The enzyme catalyses L-threonine + NAD(+) = (2S)-2-amino-3-oxobutanoate + NADH + H(+). It participates in amino-acid degradation; L-threonine degradation via oxydo-reductase pathway; glycine from L-threonine: step 1/2. Catalyzes the NAD(+)-dependent oxidation of L-threonine to 2-amino-3-ketobutyrate. The protein is L-threonine 3-dehydrogenase of Shigella boydii serotype 4 (strain Sb227).